Here is a 533-residue protein sequence, read N- to C-terminus: Probable ribonuclease ZC3H12D (533 aa).

Positions 92–246 (LRPIVIDGSN…PLGRRGPTLS (155 aa)) constitute an RNase NYN domain. The C3H1-type zinc finger occupies 251–282 (KKPRPPEPSWQHCPYGKKCTYGVKCRFYHPER). The interval 262-368 (HCPYGKKCTY…ASGVVSQSRG (107 aa)) is necessary for interaction with ZC3H12A. A disordered region spans residues 302 to 335 (LGGGAEEPRTPSARSRPTTARLLPQEPGEHDLPP).

The protein belongs to the ZC3H12 family. As to quaternary structure, interacts with ZC3H12A. Requires Mg(2+) as cofactor. Expressed at low levels in bone marrow derived macrophages.

Its subcellular location is the cytoplasm. The protein resides in the P-body. Its function is as follows. May regulate cell growth likely by suppressing RB1 phosphorylation. May function as RNase and regulate the levels of target RNA species (Potential). In association with ZC3H12A enhances the degradation of interleukin IL-6 mRNA level in activated macrophages. Serve as a tumor suppressor in certain leukemia cells. Overexpression inhibits the G1 to S phase progression through suppression of RB1 phosphorylation. This chain is Probable ribonuclease ZC3H12D, found in Mus musculus (Mouse).